The sequence spans 468 residues: tRNA threonylcarbamoyladenosine dehydratase (468 aa).

3 helical membrane passes run phenylalanine 15–phenylalanine 35, asparagine 109–alanine 129, and isoleucine 315–leucine 335.

Belongs to the HesA/MoeB/ThiF family.

The protein localises to the mitochondrion outer membrane. Catalyzes the ATP-dependent dehydration of threonylcarbamoyladenosine at position 37 (t(6)A37) to form cyclic t(6)A37 (ct(6)A37) in tRNAs that read codons beginning with adenine. This chain is tRNA threonylcarbamoyladenosine dehydratase (tcd1), found in Schizosaccharomyces pombe (strain 972 / ATCC 24843) (Fission yeast).